Here is a 198-residue protein sequence, read N- to C-terminus: Fe/S biogenesis protein NfuA (198 aa).

2 residues coordinate [4Fe-4S] cluster: Cys155 and Cys158.

The protein belongs to the NfuA family. Homodimer. [4Fe-4S] cluster serves as cofactor.

Functionally, involved in iron-sulfur cluster biogenesis. Binds a 4Fe-4S cluster, can transfer this cluster to apoproteins, and thereby intervenes in the maturation of Fe/S proteins. Could also act as a scaffold/chaperone for damaged Fe/S proteins. The protein is Fe/S biogenesis protein NfuA of Haemophilus influenzae (strain 86-028NP).